The sequence spans 632 residues: Actin-related protein 8 (632 aa).

Basic and acidic residues predominate over residues 1-30; that stretch reads MTQAEREQENGKEKEKEREKEKEKEKEQRG. The disordered stretch occupies residues 1 to 43; that stretch reads MTQAEREQENGKEKEKEREKEKEKEKEQRGIKRPIAPPVIPEP. Residue 288 to 291 coordinates ATP; that stretch reads DVGD. Disordered stretches follow at residues 410-429 and 434-494; these read MTSL…DEHY and QSKQ…GGAE. Residues 434–443 show a composition bias toward low complexity; it reads QSKQDQSSKA.

This sequence belongs to the actin family. ARP8 subfamily. In terms of assembly, component of the chromatin remodeling INO80 complex; specifically part of a complex module associated with the DBINO domain of INO80. Exists as monomers and dimers, but the dimer is most probably the biologically relevant form required for stable interactions with histones that exploits the twofold symmetry of the nucleosome core.

The protein localises to the nucleus. It localises to the chromosome. Its function is as follows. Plays an important role in the functional organization of mitotic chromosomes. Exhibits low basal ATPase activity, and unable to polymerize. Functionally, proposed core component of the chromatin remodeling INO80 complex which is involved in transcriptional regulation, DNA replication and probably DNA repair. Required for the recruitment of INO80 (and probably the INO80 complex) to sites of DNA damage Strongly prefer nucleosomes and H3-H4 tetramers over H2A-H2B dimers, suggesting it may act as a nucleosome recognition module within the complex. The sequence is that of Actin-related protein 8 (actr8) from Salmo salar (Atlantic salmon).